A 295-amino-acid polypeptide reads, in one-letter code: Shikimate dehydrogenase (NADP(+)) (295 aa).

Residues 22–24 and serine 69 contribute to the shikimate site; that span reads SLS. The active-site Proton acceptor is lysine 73. Residues asparagine 94 and aspartate 111 each contribute to the shikimate site. Residues 135-139 and valine 236 each bind NADP(+); that span reads GAGGA. Tyrosine 238 is a shikimate binding site. Glycine 260 contacts NADP(+).

The protein belongs to the shikimate dehydrogenase family. Homodimer.

The enzyme catalyses shikimate + NADP(+) = 3-dehydroshikimate + NADPH + H(+). Its pathway is metabolic intermediate biosynthesis; chorismate biosynthesis; chorismate from D-erythrose 4-phosphate and phosphoenolpyruvate: step 4/7. Involved in the biosynthesis of the chorismate, which leads to the biosynthesis of aromatic amino acids. Catalyzes the reversible NADPH linked reduction of 3-dehydroshikimate (DHSA) to yield shikimate (SA). The sequence is that of Shikimate dehydrogenase (NADP(+)) from Streptococcus uberis (strain ATCC BAA-854 / 0140J).